The chain runs to 751 residues: Serine/threonine-protein kinase-like protein CCR4 (751 aa).

The signal sequence occupies residues 1 to 31 (MALTISISCFSSYFVSLLLLVLSSFSFVCFS). The Extracellular segment spans residues 32–366 (LSTVSISHIS…NKTWSRRNIA (335 aa)). N-linked (GlcNAc...) asparagine glycans are attached at residues N42, N51, N98, N243, N254, N283, and N357. The helical transmembrane segment at 367-387 (FLVVGCVGTFSLLLVISFLIF) threads the bilayer. At 388 to 751 (KSHCRCRVHD…TETVSRSNTY (364 aa)) the chain is on the cytoplasmic side. The 291-residue stretch at 443-733 (FSVRFHLGIG…EVVSKLESAL (291 aa)) folds into the Protein kinase domain. ATP contacts are provided by residues 449 to 457 (LGIGSFGSV) and K471. D579 (proton acceptor) is an active-site residue.

The protein belongs to the protein kinase superfamily. Ser/Thr protein kinase family. In terms of assembly, homodimer. As to expression, expressed in roots, leaves, especially in trichomes, shoot apical meristems (SAM), and, to a lower extent, in floral buds.

The protein localises to the membrane. The enzyme catalyses L-seryl-[protein] + ATP = O-phospho-L-seryl-[protein] + ADP + H(+). It catalyses the reaction L-threonyl-[protein] + ATP = O-phospho-L-threonyl-[protein] + ADP + H(+). This is Serine/threonine-protein kinase-like protein CCR4 (CCR4) from Arabidopsis thaliana (Mouse-ear cress).